Consider the following 77-residue polypeptide: MHHVYVIECSDGTYYTGYTTDVQRRVAEHNAGDGAKYTRGRTPVTLRHTESFDSKSEAMRREYRIKQLSRAQKEALF.

The GIY-YIG domain maps to 1–75; the sequence is MHHVYVIECS…KQLSRAQKEA (75 aa).

Belongs to the UPF0213 family.

The sequence is that of UPF0213 protein VNG_2274C from Halobacterium salinarum (strain ATCC 700922 / JCM 11081 / NRC-1) (Halobacterium halobium).